A 191-amino-acid polypeptide reads, in one-letter code: Thymidine kinase (191 aa).

ATP is bound by residues Gly-9 to Thr-16 and Asp-85 to Gln-88. Residue Glu-86 is the Proton acceptor of the active site. Residues Cys-143, Cys-146, Cys-180, and His-183 each contribute to the Zn(2+) site.

Belongs to the thymidine kinase family. As to quaternary structure, homotetramer.

The protein resides in the cytoplasm. It carries out the reaction thymidine + ATP = dTMP + ADP + H(+). This chain is Thymidine kinase, found in Streptococcus gordonii (strain Challis / ATCC 35105 / BCRC 15272 / CH1 / DL1 / V288).